A 112-amino-acid polypeptide reads, in one-letter code: Cuticle protein AM1239 (112 aa).

The region spanning 16-85 (DGNFNYRFET…FIPTDHPLPA (70 aa)) is the Chitin-binding type R&amp;R domain. Thr79 carries an O-linked (HexNAc) threonine glycan.

In terms of tissue distribution, arthrodial membrane.

This chain is Cuticle protein AM1239, found in Cancer pagurus (Rock crab).